The following is a 384-amino-acid chain: BarH-like 2 homeobox protein (384 aa).

Disordered stretches follow at residues 1 to 134 (MTAM…APRT), 154 to 235 (CAPY…ARTA), and 364 to 384 (PGGQPALNPLSNPIPGTPHPR). 2 stretches are compositionally biased toward low complexity: residues 101–110 (VPAQSLQPSP) and 119–134 (QSAAQQLGSAAAAPRT). Over residues 157 to 175 (YSTSVSSPHHTPKQESNAA) the composition is skewed to polar residues. The span at 177-217 (ESFRPKLEQEDGKTKLDKREDPQSDIKCHGTKEEGDREITS) shows a compositional bias: basic and acidic residues. Positions 229–288 (PRKARTAFSDHQLNQLERSFERQKYLSVQDRMDLAAALNLTDTQVKTWYQNRRTKWKRQT) form a DNA-binding region, homeobox.

This sequence belongs to the BAR homeobox family.

It localises to the nucleus. Potential regulator of neural basic helix-loop-helix genes. It may down-regulate expression of ASCL1 and, within the thalamus, up-regulate NGN2, thereby regulating distinct patterns of neuronal differentiation. This chain is BarH-like 2 homeobox protein (Barhl2), found in Mus musculus (Mouse).